The sequence spans 1577 residues: Disco-interacting protein 2 homolog B-A (1577 aa).

In terms of domain architecture, DMAP1-binding spans 7-124 (DLAALPKEVR…PMPTKRRSAF (118 aa)). Disordered regions lie at residues 109–148 (EEKMALPMPTKRRSAFVQSPAENCTPPDTSSASEDEGSLR), 173–204 (VQGSSTSSSASSTLSHGDGKTHNHNNHSQGQT), 217–239 (DTNSSSGSVPPDVTSTAPQDRNS), and 253–273 (SRGQSRSSMMDTAGGVPAHSR). Over residues 124–140 (FVQSPAENCTPPDTSSA) the composition is skewed to polar residues. A compositionally biased stretch (low complexity) spans 176–187 (SSTSSSASSTLS). Positions 217–236 (DTNSSSGSVPPDVTSTAPQD) are enriched in polar residues.

The protein belongs to the DIP2 family.

Its subcellular location is the cell projection. The protein resides in the dendrite. The protein localises to the axon. It is found in the perikaryon. Functionally, negatively regulates axonal outgrowth and is essential for normal synaptic transmission. Not required for regulation of axon polarity. Promotes acetylation of alpha-tubulin. This is Disco-interacting protein 2 homolog B-A (dip2ba) from Danio rerio (Zebrafish).